The sequence spans 93 residues: MSFLFGGPPKMSSAEKIAAAETEVEMVSDMFNRLTESCQKKCIPNDYREGDLNKGESVCLDRCVSKFFEVNIKVSEKMQGEAAQKQGAPGFGM.

The Twin CX3C motif signature appears at 38 to 63; sequence CQKKCIPNDYREGDLNKGESVCLDRC. Disulfide bonds link Cys38–Cys63 and Cys42–Cys59.

Belongs to the small Tim family. Heterohexamer; composed of 3 copies of TIM9 and 3 copies of TIM10, named soluble 70 kDa complex. Associates directly with the TIM22 complex, whose core is composed of TIM22 and TIM54. Interacts with the transmembrane regions of multi-pass transmembrane proteins in transit.

The protein resides in the mitochondrion inner membrane. Its function is as follows. Mitochondrial intermembrane chaperone that participates in the import and insertion of multi-pass transmembrane proteins into the mitochondrial inner membrane. Also required for the transfer of beta-barrel precursors from the TOM complex to the sorting and assembly machinery (SAM complex) of the outer membrane. Acts as a chaperone-like protein that protects the hydrophobic precursors from aggregation and guide them through the mitochondrial intermembrane space. The protein is Mitochondrial import inner membrane translocase subunit tim10 (tim10) of Aspergillus fumigatus (strain ATCC MYA-4609 / CBS 101355 / FGSC A1100 / Af293) (Neosartorya fumigata).